Consider the following 120-residue polypeptide: Large ribosomal subunit protein uL18 (120 aa).

Belongs to the universal ribosomal protein uL18 family. As to quaternary structure, part of the 50S ribosomal subunit; part of the 5S rRNA/L5/L18/L25 subcomplex. Contacts the 5S and 23S rRNAs.

Functionally, this is one of the proteins that bind and probably mediate the attachment of the 5S RNA into the large ribosomal subunit, where it forms part of the central protuberance. The chain is Large ribosomal subunit protein uL18 from Picosynechococcus sp. (strain ATCC 27264 / PCC 7002 / PR-6) (Agmenellum quadruplicatum).